The primary structure comprises 166 residues: UPF0561 protein C2orf68 homolog (166 aa).

A compositionally biased stretch (basic and acidic residues) spans 32 to 49; sequence NQLDRDDYDKKVKQAAKE. A disordered region spans residues 32-107; that stretch reads NQLDRDDYDK…SELEPPGRQL (76 aa). Over residues 91-101 the composition is skewed to low complexity; that stretch reads ESSSSGSSELE.

Belongs to the UPF0561 family.

This is UPF0561 protein C2orf68 homolog from Mus musculus (Mouse).